Reading from the N-terminus, the 555-residue chain is Urocanate hydratase (555 aa).

NAD(+)-binding positions include 51-52 (GG), Gln-129, 175-177 (GMG), Glu-195, 262-266 (QTSAH), 272-273 (YL), and Tyr-321. The active site involves Cys-409. Gly-491 contributes to the NAD(+) binding site.

It belongs to the urocanase family. NAD(+) serves as cofactor.

The protein resides in the cytoplasm. It carries out the reaction 4-imidazolone-5-propanoate = trans-urocanate + H2O. The protein operates within amino-acid degradation; L-histidine degradation into L-glutamate; N-formimidoyl-L-glutamate from L-histidine: step 2/3. In terms of biological role, catalyzes the conversion of urocanate to 4-imidazolone-5-propionate. The polypeptide is Urocanate hydratase (Stenotrophomonas maltophilia (strain R551-3)).